The primary structure comprises 276 residues: 3-methyl-2-oxobutanoate hydroxymethyltransferase (276 aa).

Mg(2+) contacts are provided by D44 and D83. 3-methyl-2-oxobutanoate contacts are provided by residues 44-45 (DS), D83, and K113. E115 is a binding site for Mg(2+). The active-site Proton acceptor is the E182.

Belongs to the PanB family. As to quaternary structure, homodecamer; pentamer of dimers. It depends on Mg(2+) as a cofactor.

It localises to the cytoplasm. The catalysed reaction is 3-methyl-2-oxobutanoate + (6R)-5,10-methylene-5,6,7,8-tetrahydrofolate + H2O = 2-dehydropantoate + (6S)-5,6,7,8-tetrahydrofolate. It functions in the pathway cofactor biosynthesis; (R)-pantothenate biosynthesis; (R)-pantoate from 3-methyl-2-oxobutanoate: step 1/2. Catalyzes the reversible reaction in which hydroxymethyl group from 5,10-methylenetetrahydrofolate is transferred onto alpha-ketoisovalerate to form ketopantoate. The sequence is that of 3-methyl-2-oxobutanoate hydroxymethyltransferase from Clostridium acetobutylicum (strain ATCC 824 / DSM 792 / JCM 1419 / IAM 19013 / LMG 5710 / NBRC 13948 / NRRL B-527 / VKM B-1787 / 2291 / W).